The primary structure comprises 322 residues: tRNA dimethylallyltransferase (322 aa).

Residue 12 to 19 coordinates ATP; that stretch reads GPTAAGKT. Residue 14 to 19 participates in substrate binding; sequence TAAGKT. 2 interaction with substrate tRNA regions span residues 37 to 40 and 160 to 164; these read DSAL and QRLIR.

Belongs to the IPP transferase family. As to quaternary structure, monomer. It depends on Mg(2+) as a cofactor.

The catalysed reaction is adenosine(37) in tRNA + dimethylallyl diphosphate = N(6)-dimethylallyladenosine(37) in tRNA + diphosphate. Functionally, catalyzes the transfer of a dimethylallyl group onto the adenine at position 37 in tRNAs that read codons beginning with uridine, leading to the formation of N6-(dimethylallyl)adenosine (i(6)A). This is tRNA dimethylallyltransferase from Pseudomonas putida (Arthrobacter siderocapsulatus).